The sequence spans 325 residues: Olfactory receptor 1S2 (325 aa).

Topologically, residues 1–38 (MKTLCSFLQISRNMHQENQTTITEFILLGLSNQAEHQN) are extracellular. N-linked (GlcNAc...) asparagine glycosylation is present at N18. Residues 39–62 (LLFVLFLSMYVVTVVGNGLIIVAI) form a helical membrane-spanning segment. Residues 63–70 (SLDIYLHT) lie on the Cytoplasmic side of the membrane. A helical transmembrane segment spans residues 71–92 (PMYLFLAYLSFADISSISNSVP). Residues 93–113 (KMLVNIQTNSQSISYESCITQ) lie on the Extracellular side of the membrane. A disulfide bond links C110 and C202. A helical membrane pass occupies residues 114-133 (MYFSIVFVVTDNLLLGTMAF). The Cytoplasmic portion of the chain corresponds to 134-152 (DHFVAICHPLNYTTFMRAR). The chain crosses the membrane as a helical span at residues 153-171 (FGTLLTVISWFLSNIIALT). Residues 172 to 208 (HTLLLIQLLFCDHNTLPHFFCDLAPLLKLSCSDTMIN) lie on the Extracellular side of the membrane. Residues 209-232 (ELVLFIVGLSVIIFPFVLIFFSYV) form a helical membrane-spanning segment. Topologically, residues 233–249 (CIIRAVLGVSSTQGKWK) are cytoplasmic. The chain crosses the membrane as a helical span at residues 250–272 (AFSTCGSHLTIALLFYGTTVGVY). Residues 273-285 (FFPSSTHPEDTDK) are Extracellular-facing. Residues 286–305 (IGAVLFTVVTPMMNPFIYSL) form a helical membrane-spanning segment. Topologically, residues 306-325 (RNKDMKGALRKLINRKISSL) are cytoplasmic.

It belongs to the G-protein coupled receptor 1 family.

The protein localises to the cell membrane. Its function is as follows. Odorant receptor. This Homo sapiens (Human) protein is Olfactory receptor 1S2 (OR1S2).